Here is a 168-residue protein sequence, read N- to C-terminus: 3-dehydroquinate dehydratase (168 aa).

Tyr-22 (proton acceptor) is an active-site residue. Positions 76, 82, and 89 each coordinate substrate. His-102 serves as the catalytic Proton donor. Substrate contacts are provided by residues 103-104 (LT) and Arg-113.

Belongs to the type-II 3-dehydroquinase family. Homododecamer.

The enzyme catalyses 3-dehydroquinate = 3-dehydroshikimate + H2O. It functions in the pathway metabolic intermediate biosynthesis; chorismate biosynthesis; chorismate from D-erythrose 4-phosphate and phosphoenolpyruvate: step 3/7. In terms of biological role, catalyzes a trans-dehydration via an enolate intermediate. The sequence is that of 3-dehydroquinate dehydratase from Helicobacter acinonychis (strain Sheeba).